The chain runs to 248 residues: MFQKVEGIVIRTTDYGETNKIVTIFSRELGKVSAMARGAKKPKSRLASVSQLMTHGHFLIQMGSGLGTLQQGEIISTMKEIREDIFLTAYASFIVELTDKATEDKKHNPYLFEMLYQTLHYMCEGVDPEVLSLIYQTKMLPVLGMRPYFDTCAICHQETDFVAFSVREGGFLCSRHAEQDQYRIPVGEAVHKLLRLFYHFDLHRLGNVSVKDSTKKQMRLVLNTYYDEYCGIYLKSRRFLEQLDKFQI.

This sequence belongs to the RecO family.

Involved in DNA repair and RecF pathway recombination. The protein is DNA repair protein RecO of Bacillus cereus (strain 03BB102).